We begin with the raw amino-acid sequence, 245 residues long: Transmembrane and ubiquitin-like domain-containing protein 1 (245 aa).

The required to release iHOPS from membranes stretch occupies residues 2-30; it reads ALIEGVGDEVTVLFSVLACLLVLALAWVS. A helical transmembrane segment spans residues 11–31; it reads VTVLFSVLACLLVLALAWVST. Positions 34–51 are enriched in polar residues; sequence TESTDPLPQSSGTTTPAQ. A disordered region spans residues 34 to 100; it reads TESTDPLPQS…ASTPPDSPQE (67 aa). Phosphoserine is present on residues S73, S97, and S126. In terms of domain architecture, Ubiquitin-like spans 102–175; it reads LLLRLKFLND…LHCHVSTRVG (74 aa). Transmembrane regions (helical) follow at residues 194–214 and 219–239; these read IGSL…YCQI and FFPL…SLLA.

As to quaternary structure, interacts with EEF1A1, GRIA2, GRIP1. Interacts with CAMLG, TUBG1. Interacts with NPM1 and CDKN2A; TMUB1 can enhance interaction between NPM1 and CDKN2A and is proposed to bridge the proteins; proposed to be mediated by iHOPS. Interacts with ERLIN2 and AMFR; TMUB1 promotes the interaction of ERLIN2 with AMFR. Post-translationally, processed by regulated intramembrane proteolysis (RIP) in the N-terminus to release iHOPS from membranes.

It is found in the membrane. The protein localises to the postsynaptic cell membrane. The protein resides in the recycling endosome. It localises to the cytoplasm. Its subcellular location is the cytoskeleton. It is found in the microtubule organizing center. The protein localises to the centrosome. The protein resides in the nucleus. It localises to the nucleolus. Functionally, involved in sterol-regulated ubiquitination and degradation of HMG-CoA reductase HMGCR. Involved in positive regulation of AMPA-selective glutamate receptor GRIA2 recycling to the cell surface. Acts as a negative regulator of hepatocyte growth during regeneration. In terms of biological role, may contribute to the regulation of translation during cell-cycle progression. May contribute to the regulation of cell proliferation. May be involved in centrosome assembly. Modulates stabilization and nucleolar localization of tumor suppressor CDKN2A and enhances association between CDKN2A and NPM1. The sequence is that of Transmembrane and ubiquitin-like domain-containing protein 1 (Tmub1) from Rattus norvegicus (Rat).